The sequence spans 260 residues: uncharacterized protein (260 aa).

This is an uncharacterized protein from Bacillus subtilis (strain 168).